We begin with the raw amino-acid sequence, 280 residues long: MVPKTGVSDRQENKLTQYFDDILRLSADLLTQQQLKTIKLDPKVTTGFSKAQQKGLGDRITQFYSLLDTLDVSLQTTADYVGAVKDSALQLKKQREEEQIKKQEQEKLERQLLEQQKLEQQQLEQKQLKQKQQQQQQQQQQQQQQQPQEQQHEQQQRYSAKNTPIDMLTNFDTDLPSAGITQAQSFNSEFGDLNGMDLSMFDSMDNQVGFGGLQNTSGGNEKKNDPQINFNDTNAPPSAVNVPENGNPSSYLTLNDFNDLGIDWNAANDNNELNLEDFNI.

The tract at residues 212–247 is disordered; it reads GLQNTSGGNEKKNDPQINFNDTNAPPSAVNVPENGN. Positions 226–236 are enriched in polar residues; the sequence is PQINFNDTNAP.

Belongs to the Mediator complex subunit 2 family. In terms of assembly, component of the Mediator complex.

It is found in the nucleus. In terms of biological role, component of the Mediator complex, a coactivator involved in the regulated transcription of nearly all RNA polymerase II-dependent genes. Mediator functions as a bridge to convey information from gene-specific regulatory proteins to the basal RNA polymerase II transcription machinery. Mediator is recruited to promoters by direct interactions with regulatory proteins and serves as a scaffold for the assembly of a functional preinitiation complex with RNA polymerase II and the general transcription factors. The polypeptide is Mediator of RNA polymerase II transcription subunit 2 (MED2) (Kluyveromyces lactis (strain ATCC 8585 / CBS 2359 / DSM 70799 / NBRC 1267 / NRRL Y-1140 / WM37) (Yeast)).